The primary structure comprises 482 residues: Dual specificity protein phosphatase 10 (482 aa).

The Rhodanese domain occupies 168-285 (PSQGPVIIDC…FKQNHENLCD (118 aa)). The interaction with MAP kinases stretch occupies residues 199 to 215 (KISRRRLQQGKITVLDL). Residues 321–464 (ELTPILPFLF…LLEFEEDLNN (144 aa)) enclose the Tyrosine-protein phosphatase domain. The Phosphocysteine intermediate role is filled by Cys-408.

This sequence belongs to the protein-tyrosine phosphatase family. Non-receptor class dual specificity subfamily. In terms of assembly, monomer. Interacts with MAPK14. As to expression, expressed in keratinocytes (at protein level). Detected in brain.

It localises to the cytoplasm. Its subcellular location is the nucleus. It catalyses the reaction O-phospho-L-tyrosyl-[protein] + H2O = L-tyrosyl-[protein] + phosphate. The enzyme catalyses O-phospho-L-seryl-[protein] + H2O = L-seryl-[protein] + phosphate. It carries out the reaction O-phospho-L-threonyl-[protein] + H2O = L-threonyl-[protein] + phosphate. Its function is as follows. Protein phosphatase involved in the inactivation of MAP kinases. Has a specificity for the MAPK11/MAPK12/MAPK13/MAPK14 subfamily. It preferably dephosphorylates p38. The chain is Dual specificity protein phosphatase 10 (DUSP10) from Homo sapiens (Human).